Reading from the N-terminus, the 216-residue chain is Uridine kinase (216 aa).

16-23 (GASASGKS) is a binding site for ATP.

This sequence belongs to the uridine kinase family.

It localises to the cytoplasm. It carries out the reaction uridine + ATP = UMP + ADP + H(+). It catalyses the reaction cytidine + ATP = CMP + ADP + H(+). It functions in the pathway pyrimidine metabolism; CTP biosynthesis via salvage pathway; CTP from cytidine: step 1/3. The protein operates within pyrimidine metabolism; UMP biosynthesis via salvage pathway; UMP from uridine: step 1/1. In Mannheimia succiniciproducens (strain KCTC 0769BP / MBEL55E), this protein is Uridine kinase.